Here is a 363-residue protein sequence, read N- to C-terminus: Inactive CLIP domain-containing serine protease A8 (363 aa).

The signal sequence occupies residues Met1–Ala25. The 50-residue stretch at Leu33–Ser82 folds into the Clip domain. 3 disulfide bridges follow: Cys36–Cys80, Cys41–Cys73, and Cys47–Cys81. Residues Asn49, Asn83, Asn117, and Asn166 are each glycosylated (N-linked (GlcNAc...) asparagine). Residues Val114–Glu360 enclose the Peptidase S1 domain. 3 cysteine pairs are disulfide-bonded: Cys245-Cys317, Cys276-Cys297, and Cys307-Cys336. N-linked (GlcNAc...) asparagine glycans are attached at residues Asn319 and Asn356.

This sequence belongs to the peptidase S1 family. CLIP subfamily. Heterodimer of a light chain and a heavy chain; disulfide-linked. Secreted as a full-length protein. Proteolytically cleaved into two chains which remain covalently linked. Cleavage is induced by Gram-positive or Gram-negative bacteria infection.

Its subcellular location is the secreted. Inactive serine protease which plays an essential role in the innate immune response against bacteria, fungi and protozoa infection by activating the melanization cascade. In the melanization cascade, acts downstream of TEP1 and SPCLIP1 to promote CLIPA28 and CLIPC9 proteolytic cleavage and CLIPC9 recruitment to microbial surfaces. In the resistant strain L3-5, required for the melanization of killed parasite P.berghei ookinetes which results in their clearance. In the susceptible strain G3, appears to be dispensable for ookinete elimination which occurs by lysis. Required for the melanization of Gram-positive and Gram-negative bacteria. During the late stage of fungus B.bassiana-mediated infection, required for the initiation of hyphae melanization by promoting prophenoloxidase PPO activation. The chain is Inactive CLIP domain-containing serine protease A8 from Anopheles gambiae (African malaria mosquito).